A 151-amino-acid chain; its full sequence is Large ribosomal subunit protein bL9 (151 aa).

This sequence belongs to the bacterial ribosomal protein bL9 family.

In terms of biological role, binds to the 23S rRNA. The polypeptide is Large ribosomal subunit protein bL9 (Lactobacillus delbrueckii subsp. bulgaricus (strain ATCC BAA-365 / Lb-18)).